The chain runs to 272 residues: HMP-PP phosphatase (272 aa).

The active-site Nucleophile is Asp8. Positions 8, 10, and 212 each coordinate Mg(2+).

Belongs to the HAD-like hydrolase superfamily. Cof family. It depends on Mg(2+) as a cofactor.

The enzyme catalyses 4-amino-2-methyl-5-(diphosphooxymethyl)pyrimidine + H2O = 4-amino-2-methyl-5-(phosphooxymethyl)pyrimidine + phosphate + H(+). Its function is as follows. Catalyzes the hydrolysis of 4-amino-2-methyl-5-hydroxymethylpyrimidine pyrophosphate (HMP-PP) to 4-amino-2-methyl-5-hydroxymethylpyrimidine phosphate (HMP-P). The chain is HMP-PP phosphatase from Salmonella enteritidis PT4 (strain P125109).